The primary structure comprises 243 residues: Peptidase E (243 aa).

Catalysis depends on charge relay system residues S118, D133, and H155.

Belongs to the peptidase S51 family.

The protein localises to the cytoplasm. It carries out the reaction Dipeptidase E catalyzes the hydrolysis of dipeptides Asp-|-Xaa. It does not act on peptides with N-terminal Glu, Asn or Gln, nor does it cleave isoaspartyl peptides.. Functionally, hydrolyzes dipeptides containing N-terminal aspartate residues. May play a role in allowing the cell to use peptide aspartate to spare carbon otherwise required for the synthesis of the aspartate family of amino acids. The protein is Peptidase E of Streptomyces coelicolor (strain ATCC BAA-471 / A3(2) / M145).